The primary structure comprises 194 residues: Fibroblast growth factor 7 (194 aa).

An N-terminal signal peptide occupies residues 1–31 (MRKWILTWILPSLLYRSCFHIICLVGTISLA). A glycan (N-linked (GlcNAc...) asparagine) is linked at Asn-45.

This sequence belongs to the heparin-binding growth factors family. In terms of assembly, interacts with FGFBP1. Interacts with FGFR2. Affinity between fibroblast growth factors (FGFs) and their receptors is increased by heparan sulfate glycosaminoglycans that function as coreceptors.

Its function is as follows. Plays an important role in the regulation of embryonic development, cell proliferation and cell differentiation. Required for normal branching morphogenesis. Growth factor active on keratinocytes. Possible major paracrine effector of normal epithelial cell proliferation. The polypeptide is Fibroblast growth factor 7 (FGF7) (Ovis aries (Sheep)).